The chain runs to 131 residues: Sirohydrochlorin cobaltochelatase (131 aa).

Residue H12 is the Proton acceptor of the active site. Co(2+) is bound by residues H12 and H78. 2 residues coordinate Ni(2+): H12 and H78. 73 to 78 contacts substrate; sequence LASGVH.

This sequence belongs to the CbiX family. CbiXS subfamily. Homotetramer; dimer of dimers.

It carries out the reaction Co-sirohydrochlorin + 2 H(+) = sirohydrochlorin + Co(2+). The catalysed reaction is Ni-sirohydrochlorin + 2 H(+) = sirohydrochlorin + Ni(2+). It functions in the pathway cofactor biosynthesis; adenosylcobalamin biosynthesis; cob(II)yrinate a,c-diamide from sirohydrochlorin (anaerobic route): step 1/10. Functionally, catalyzes the insertion of Co(2+) into sirohydrochlorin as part of the anaerobic pathway to cobalamin biosynthesis. Involved in the biosynthesis of the unique nickel-containing tetrapyrrole coenzyme F430, the prosthetic group of methyl-coenzyme M reductase (MCR), which plays a key role in methanogenesis and anaerobic methane oxidation. Catalyzes the insertion of Ni(2+) into sirohydrochlorin to yield Ni-sirohydrochlorin. The protein is Sirohydrochlorin cobaltochelatase of Methanococcoides burtonii (strain DSM 6242 / NBRC 107633 / OCM 468 / ACE-M).